The primary structure comprises 359 residues: Heme A synthase (359 aa).

A run of 5 helical transmembrane segments spans residues 8 to 28 (IMSIWLIVSTLLLLLMIVVGG), 94 to 114 (LLGRITGIIIIIPFLIFCYLK), 124 to 144 (LLLITCLVVIQGFMGWYMVKS), 159 to 179 (GHLLLAVIIYHQLIAELLIII), and 215 to 235 (IIIFLLYTQIMFGALVAGLDA). His-274 serves as a coordination point for heme. Transmembrane regions (helical) follow at residues 276–296 (WFGILISGLIICYAIWLIILN), 303–323 (MGMVAACLVLVQVTTGIITLL), and 328–348 (ILAALTHQVGAILILTTFLFI). A heme-binding site is contributed by His-334.

The protein belongs to the COX15/CtaA family. Type 2 subfamily. As to quaternary structure, interacts with CtaB. Heme b serves as cofactor.

It localises to the cell membrane. The catalysed reaction is Fe(II)-heme o + 2 A + H2O = Fe(II)-heme a + 2 AH2. It functions in the pathway porphyrin-containing compound metabolism; heme A biosynthesis; heme A from heme O: step 1/1. Its function is as follows. Catalyzes the conversion of heme O to heme A by two successive hydroxylations of the methyl group at C8. The first hydroxylation forms heme I, the second hydroxylation results in an unstable dihydroxymethyl group, which spontaneously dehydrates, resulting in the formyl group of heme A. The protein is Heme A synthase of Orientia tsutsugamushi (strain Boryong) (Rickettsia tsutsugamushi).